Reading from the N-terminus, the 1438-residue chain is DNA polymerase III PolC-type (1438 aa).

One can recognise an Exonuclease domain in the interval Y422–F578.

The protein belongs to the DNA polymerase type-C family. PolC subfamily.

Its subcellular location is the cytoplasm. It catalyses the reaction DNA(n) + a 2'-deoxyribonucleoside 5'-triphosphate = DNA(n+1) + diphosphate. Required for replicative DNA synthesis. This DNA polymerase also exhibits 3' to 5' exonuclease activity. This is DNA polymerase III PolC-type from Staphylococcus epidermidis (strain ATCC 35984 / DSM 28319 / BCRC 17069 / CCUG 31568 / BM 3577 / RP62A).